Consider the following 233-residue polypeptide: Transcriptional regulatory protein PrrA (233 aa).

A Response regulatory domain is found at 9–123; it reads RVLVVDDDSD…ELVARVKALL (115 aa). Asp58 bears the 4-aspartylphosphate mark. The ompR/PhoB-type DNA-binding region spans 134-232; that stretch reads SETITVGPLE…VRGVGFVLRM (99 aa).

In terms of processing, phosphorylated by PrrB at Asp-58.

The protein localises to the cytoplasm. In terms of biological role, member of the two-component regulatory system PrrB/PrrA that is involved specifically in early intracellular multiplication of Mycobacterium and is essential for its viability. Upon phosphorylation by PrrB, functions as a transcription regulator by direct binding to promoter regions of target genes to positively regulate their expression. Autoregulates its own expression. This chain is Transcriptional regulatory protein PrrA (prrA), found in Mycobacterium bovis (strain ATCC BAA-935 / AF2122/97).